The sequence spans 731 residues: MSRVLLRGIQCHACRSNVIRSFISLSDVAITPLAGGSRSTAQARPPPLSRNFSSQHAKLFSNQPSDNAELSVDPIPEIHNGEEPEGQPEESQEHIPWYLKEEQVEETIPHPLRRQQPLPPLPENPPPILENLLEHISVDIGLDNLSLLDLRRLDPPPALGANLIMIFGTARGVKHLNVSADRLCRWLRTTYKLRPDADGLLGRNELKIKLRRKARRAKLAKSAKSTLTQPDDGITTGWICVDVGTVEGGQFRKPEEELRKVGFVGFGTVVEGTRIVVQMMTEEKREEIDLEGLWRQKLERNSLENEGLPQPQAAAPQEAGDIHEQLTIPPTNINHQISHATQISPNYEQRRGISTGSRYQDATSDTWGTSRISPNGETTHLEPSAPSSPTSLSHRFKNIPPHEAIYDLGQGTHDRCSTAFLQQFYQEVARAPSELASSRRIELMCIAIELHHPGYRKPDLFQAIQEHILSNYALTRAQFLQILDAFLSFKPDLTSNPPRLLLPNADMELALQIIDHAGLRGLNLLDSTILVKLFVGVSFRAQVYPVEQKDLPNSPVIGNRIPVPLNTCDAVKRVQSRLTRVKTAAKISFTAEQYMKILRVLFDQGSYSGFWNTWEDMALAGVARDKALYVFLFQLHAESDGWQCFTTQLLNCIPMMERENPPVHLDGELAEVTQKCITIAYPEIIDRVERNEQNPLVRMWHRCRVAIENAAAAGGRGQDSTAPYVCNHSDI.

Residues 1–52 (MSRVLLRGIQCHACRSNVIRSFISLSDVAITPLAGGSRSTAQARPPPLSRNF) constitute a mitochondrion transit peptide. Disordered regions lie at residues 61-93 (SNQPSDNAELSVDPIPEIHNGEEPEGQPEESQE) and 356-396 (GSRY…SHRF). The segment covering 356–378 (GSRYQDATSDTWGTSRISPNGET) has biased composition (polar residues).

It belongs to the ATP25 family.

It localises to the mitochondrion inner membrane. Its function is as follows. Probable mitochondrial mRNA stabilization factor. This chain is ATPase synthesis protein 25, mitochondrial (ATP25), found in Ajellomyces capsulatus (strain G186AR / H82 / ATCC MYA-2454 / RMSCC 2432) (Darling's disease fungus).